The sequence spans 200 residues: COMM domain-containing protein 7 (200 aa).

The 68-residue stretch at 133–200 (QLIDMEWKFG…RVRTSMECFC (68 aa)) folds into the COMM domain.

Belongs to the COMM domain-containing protein 7 family. Component of the commander complex consisting of the CCC subcomplex and the retriever subcomplex. Component of the CCC (COMMD/CCDC22/CCDC93) subcomplex consisting of COMMD1, COMMD2, COMMD3, COMMD4, COMMD5, COMMD6, COMMD7, COMMD8, COMMD9, COMMD10, CCDC22 and CCDC93; within the complex forms a heterodimer with COMMD9. Interacts with RELA. Interacts with CCDC22, CCDC93, SCNN1B, CUL7. As to expression, widely expressed with highest expression in lung.

It localises to the cytoplasmic vesicle. Functionally, scaffold protein in the commander complex that is essential for endosomal recycling of transmembrane cargos; the commander complex is composed of the CCC subcomplex and the retriever subcomplex. May modulate activity of cullin-RING E3 ubiquitin ligase (CRL) complexes. Associates with the NF-kappa-B complex and suppresses its transcriptional activity. The sequence is that of COMM domain-containing protein 7 (COMMD7) from Homo sapiens (Human).